Reading from the N-terminus, the 243-residue chain is 1-(5-phosphoribosyl)-5-[(5-phosphoribosylamino)methylideneamino] imidazole-4-carboxamide isomerase (243 aa).

D8 serves as the catalytic Proton acceptor. Residue D130 is the Proton donor of the active site.

It belongs to the HisA/HisF family.

Its subcellular location is the cytoplasm. The catalysed reaction is 1-(5-phospho-beta-D-ribosyl)-5-[(5-phospho-beta-D-ribosylamino)methylideneamino]imidazole-4-carboxamide = 5-[(5-phospho-1-deoxy-D-ribulos-1-ylimino)methylamino]-1-(5-phospho-beta-D-ribosyl)imidazole-4-carboxamide. It functions in the pathway amino-acid biosynthesis; L-histidine biosynthesis; L-histidine from 5-phospho-alpha-D-ribose 1-diphosphate: step 4/9. In Cellvibrio japonicus (strain Ueda107) (Pseudomonas fluorescens subsp. cellulosa), this protein is 1-(5-phosphoribosyl)-5-[(5-phosphoribosylamino)methylideneamino] imidazole-4-carboxamide isomerase.